A 367-amino-acid polypeptide reads, in one-letter code: UDP-N-acetylglucosamine--N-acetylmuramyl-(pentapeptide) pyrophosphoryl-undecaprenol N-acetylglucosamine transferase (367 aa).

Residues 15-17 (TGG), Asn-127, Arg-163, Ser-191, Ile-249, and Gln-294 contribute to the UDP-N-acetyl-alpha-D-glucosamine site.

It belongs to the glycosyltransferase 28 family. MurG subfamily.

The protein resides in the cell inner membrane. It catalyses the reaction di-trans,octa-cis-undecaprenyl diphospho-N-acetyl-alpha-D-muramoyl-L-alanyl-D-glutamyl-meso-2,6-diaminopimeloyl-D-alanyl-D-alanine + UDP-N-acetyl-alpha-D-glucosamine = di-trans,octa-cis-undecaprenyl diphospho-[N-acetyl-alpha-D-glucosaminyl-(1-&gt;4)]-N-acetyl-alpha-D-muramoyl-L-alanyl-D-glutamyl-meso-2,6-diaminopimeloyl-D-alanyl-D-alanine + UDP + H(+). Its pathway is cell wall biogenesis; peptidoglycan biosynthesis. Functionally, cell wall formation. Catalyzes the transfer of a GlcNAc subunit on undecaprenyl-pyrophosphoryl-MurNAc-pentapeptide (lipid intermediate I) to form undecaprenyl-pyrophosphoryl-MurNAc-(pentapeptide)GlcNAc (lipid intermediate II). This chain is UDP-N-acetylglucosamine--N-acetylmuramyl-(pentapeptide) pyrophosphoryl-undecaprenol N-acetylglucosamine transferase, found in Burkholderia lata (strain ATCC 17760 / DSM 23089 / LMG 22485 / NCIMB 9086 / R18194 / 383).